The sequence spans 342 residues: tRNA N6-adenosine threonylcarbamoyltransferase (342 aa).

Fe cation is bound by residues histidine 112 and histidine 116. Substrate is bound by residues 134-138 (IVSGG), aspartate 167, glycine 180, and asparagine 278. Aspartate 306 provides a ligand contact to Fe cation.

Belongs to the KAE1 / TsaD family. Fe(2+) serves as cofactor.

The protein resides in the cytoplasm. It carries out the reaction L-threonylcarbamoyladenylate + adenosine(37) in tRNA = N(6)-L-threonylcarbamoyladenosine(37) in tRNA + AMP + H(+). Required for the formation of a threonylcarbamoyl group on adenosine at position 37 (t(6)A37) in tRNAs that read codons beginning with adenine. Is involved in the transfer of the threonylcarbamoyl moiety of threonylcarbamoyl-AMP (TC-AMP) to the N6 group of A37, together with TsaE and TsaB. TsaD likely plays a direct catalytic role in this reaction. The sequence is that of tRNA N6-adenosine threonylcarbamoyltransferase from Anaplasma phagocytophilum (strain HZ).